A 427-amino-acid chain; its full sequence is Tuberculostearic acid methyltransferase UfaA1 (427 aa).

Belongs to the CFA/CMAS family.

Its pathway is lipid metabolism; fatty acid biosynthesis. Inhibited by S-adenosyl-L-homocysteine. Involved in the biosynthesis of the tuberculostearic acid (10-methylstearic-acid or TSA), a constituent lipid of the mycobacterial cell wall. Catalyzes the transfer of the methyl group from S-adenosyl-L-methionine (SAM) to the double bond of oleic acid in phosphatidylethanolamine or phosphatidylcholine to produce TSA. In Mycobacterium tuberculosis (strain ATCC 25618 / H37Rv), this protein is Tuberculostearic acid methyltransferase UfaA1.